Here is a 41-residue protein sequence, read N- to C-terminus: Antimicrobial protein PN-AMP1 (41 aa).

A Pyrrolidone carboxylic acid modification is found at glutamine 1. One can recognise a Chitin-binding type-1 domain in the interval 1-41 (QQCGRQASGRLCGNRLCCSQWGYCGSTASYCGAGCQSQCRS). Cystine bridges form between cysteine 3–cysteine 18, cysteine 12–cysteine 24, cysteine 17–cysteine 31, and cysteine 35–cysteine 39.

Its function is as follows. Chitin-binding protein with a defensive function against numerous chitin containing fungal pathogens. It is also an inhibitor of Gram-positive bacteria such as B.subtilis. In Ipomoea nil (Japanese morning glory), this protein is Antimicrobial protein PN-AMP1.